The chain runs to 761 residues: Phosphoribosylformylglycinamidine synthase subunit PurL (761 aa).

Residue H49 is part of the active site. Y52 and K92 together coordinate ATP. Residue E94 participates in Mg(2+) binding. Substrate is bound by residues 95-98 (SHNH) and R117. H96 acts as the Proton acceptor in catalysis. D118 contributes to the Mg(2+) binding site. Position 241 (Q241) interacts with substrate. D269 serves as a coordination point for Mg(2+). 318–320 (ESQ) provides a ligand contact to substrate. ATP contacts are provided by N502 and G539. Residue N540 coordinates Mg(2+). S542 contacts substrate.

Belongs to the FGAMS family. As to quaternary structure, monomer. Part of the FGAM synthase complex composed of 1 PurL, 1 PurQ and 2 PurS subunits.

The protein resides in the cytoplasm. It catalyses the reaction N(2)-formyl-N(1)-(5-phospho-beta-D-ribosyl)glycinamide + L-glutamine + ATP + H2O = 2-formamido-N(1)-(5-O-phospho-beta-D-ribosyl)acetamidine + L-glutamate + ADP + phosphate + H(+). The protein operates within purine metabolism; IMP biosynthesis via de novo pathway; 5-amino-1-(5-phospho-D-ribosyl)imidazole from N(2)-formyl-N(1)-(5-phospho-D-ribosyl)glycinamide: step 1/2. In terms of biological role, part of the phosphoribosylformylglycinamidine synthase complex involved in the purines biosynthetic pathway. Catalyzes the ATP-dependent conversion of formylglycinamide ribonucleotide (FGAR) and glutamine to yield formylglycinamidine ribonucleotide (FGAM) and glutamate. The FGAM synthase complex is composed of three subunits. PurQ produces an ammonia molecule by converting glutamine to glutamate. PurL transfers the ammonia molecule to FGAR to form FGAM in an ATP-dependent manner. PurS interacts with PurQ and PurL and is thought to assist in the transfer of the ammonia molecule from PurQ to PurL. The protein is Phosphoribosylformylglycinamidine synthase subunit PurL of Chlorobium luteolum (strain DSM 273 / BCRC 81028 / 2530) (Pelodictyon luteolum).